An 825-amino-acid polypeptide reads, in one-letter code: Endoglucanase C (825 aa).

The N-terminal stretch at 1-28 is a signal peptide; the sequence is MRNKLRRLLAIMMAVLLITSLFAPMVSA. The Proton donor role is filled by glutamate 219. Glutamate 335 functions as the Nucleophile in the catalytic mechanism. A compositionally biased stretch (basic and acidic residues) spans 607 to 621; that stretch reads DRESVPEPVEHDTKG. Residues 607–635 are disordered; that stretch reads DRESVPEPVEHDTKGDSALPSDFEDGTRQ.

Belongs to the glycosyl hydrolase 5 (cellulase A) family.

It carries out the reaction Endohydrolysis of (1-&gt;4)-beta-D-glucosidic linkages in cellulose, lichenin and cereal beta-D-glucans.. This is Endoglucanase C (celC) from Evansella cellulosilytica (strain ATCC 21833 / DSM 2522 / FERM P-1141 / JCM 9156 / N-4) (Bacillus cellulosilyticus).